The primary structure comprises 669 residues: Protein adenylyltransferase SelO, mitochondrial (669 aa).

The transit peptide at methionine 1–glutamate 115 directs the protein to the mitochondrion. The ATP site is built by glycine 153, glycine 155, lysine 176, aspartate 188, glycine 189, arginine 246, and arginine 253. Residue aspartate 338 is the Proton acceptor of the active site. Mg(2+) contacts are provided by asparagine 339 and aspartate 348. Aspartate 348 lines the ATP pocket. Positions alanine 634 to serine 654 are disordered. At threonine 635 the chain carries Phosphothreonine. Serine 653 is subject to Phosphoserine. Position 667 (selenocysteine 667) is a non-standard amino acid, selenocysteine.

It belongs to the SELO family. Mg(2+) is required as a cofactor.

The protein localises to the mitochondrion. It catalyses the reaction L-tyrosyl-[protein] + ATP = O-(5'-adenylyl)-L-tyrosyl-[protein] + diphosphate. It carries out the reaction L-threonyl-[protein] + ATP = 3-O-(5'-adenylyl)-L-threonyl-[protein] + diphosphate. The catalysed reaction is L-seryl-[protein] + ATP = 3-O-(5'-adenylyl)-L-seryl-[protein] + diphosphate. Functionally, catalyzes the transfer of adenosine 5'-monophosphate (AMP) to Ser, Thr and Tyr residues of target proteins (AMPylation). May be a redox-active mitochondrial selenoprotein which interacts with a redox target protein. The protein is Protein adenylyltransferase SelO, mitochondrial of Homo sapiens (Human).